Reading from the N-terminus, the 946-residue chain is Sorting nexin-14 (946 aa).

Helical transmembrane passes span 24-44 and 49-69; these read ICRQ…ASLL and IHIL…YCSL. One can recognise a PXA domain in the interval 130–304; it reads SSKVDASLSE…LLIIFIDDSP (175 aa). An RGS domain is found at 336–468; the sequence is ELKQIREQQD…CHSDEYFRQL (133 aa). S548 is modified (phosphoserine). Residues 570-690 form the PX domain; it reads PYVDFFEDPS…DFLSPNGGET (121 aa).

Belongs to the sorting nexin family. As to expression, widely expressed both in fetal and adult tissues.

The protein localises to the lysosome membrane. Its subcellular location is the late endosome membrane. It localises to the cell projection. It is found in the dendrite. In terms of biological role, plays a role in maintaining normal neuronal excitability and synaptic transmission. May be involved in several stages of intracellular trafficking. Required for autophagosome clearance, possibly by mediating the fusion of lysosomes with autophagosomes. Binds phosphatidylinositol 3,5-bisphosphate (PtdIns(3,5)P2), a key component of late endosomes/lysosomes. Does not bind phosphatidylinositol 3-phosphate (PtdIns(3P)). The chain is Sorting nexin-14 (SNX14) from Homo sapiens (Human).